The primary structure comprises 1243 residues: ATP-dependent helicase/nuclease subunit A (1243 aa).

The 474-residue stretch at 2-475 (VNWTKEQEEA…IDLARNFRSR (474 aa)) folds into the UvrD-like helicase ATP-binding domain. Residue 23–30 (AAAGSGKT) coordinates ATP. Residues 502 to 803 (AAELIYGNKM…RIMTIHKSKG (302 aa)) form the UvrD-like helicase C-terminal domain.

It belongs to the helicase family. AddA subfamily. Heterodimer of AddA and AddB/RexB. Mg(2+) serves as cofactor.

The catalysed reaction is Couples ATP hydrolysis with the unwinding of duplex DNA by translocating in the 3'-5' direction.. The enzyme catalyses ATP + H2O = ADP + phosphate + H(+). In terms of biological role, the heterodimer acts as both an ATP-dependent DNA helicase and an ATP-dependent, dual-direction single-stranded exonuclease. Recognizes the chi site generating a DNA molecule suitable for the initiation of homologous recombination. The AddA nuclease domain is required for chi fragment generation; this subunit has the helicase and 3' -&gt; 5' nuclease activities. The sequence is that of ATP-dependent helicase/nuclease subunit A from Oceanobacillus iheyensis (strain DSM 14371 / CIP 107618 / JCM 11309 / KCTC 3954 / HTE831).